A 241-amino-acid chain; its full sequence is tRNA pseudouridine synthase A (241 aa).

Aspartate 53 serves as the catalytic Nucleophile. Position 110 (tyrosine 110) interacts with substrate.

The protein belongs to the tRNA pseudouridine synthase TruA family. Homodimer.

The catalysed reaction is uridine(38/39/40) in tRNA = pseudouridine(38/39/40) in tRNA. Its function is as follows. Formation of pseudouridine at positions 38, 39 and 40 in the anticodon stem and loop of transfer RNAs. This Malacoplasma penetrans (strain HF-2) (Mycoplasma penetrans) protein is tRNA pseudouridine synthase A.